A 209-amino-acid chain; its full sequence is Large ribosomal subunit protein uL3 (209 aa).

Glutamine 150 carries the post-translational modification N5-methylglutamine.

The protein belongs to the universal ribosomal protein uL3 family. As to quaternary structure, part of the 50S ribosomal subunit. Forms a cluster with proteins L14 and L19. Methylated by PrmB.

Its function is as follows. One of the primary rRNA binding proteins, it binds directly near the 3'-end of the 23S rRNA, where it nucleates assembly of the 50S subunit. The chain is Large ribosomal subunit protein uL3 from Vibrio parahaemolyticus serotype O3:K6 (strain RIMD 2210633).